The chain runs to 289 residues: Coiled-coil domain-containing protein 137 (289 aa).

3 disordered regions span residues M1 to P64, E149 to A184, and Q204 to S225. Residues G7 to P20 are compositionally biased toward low complexity. S19 is subject to Phosphoserine. Positions K155 to K197 form a coiled coil. Basic residues predominate over residues K162 to R177. S233 is subject to Phosphoserine. The stretch at R247–H273 forms a coiled coil. Residues L265 to L289 form a disordered region. Residues H273 to L289 show a composition bias toward basic and acidic residues.

It is found in the chromosome. This chain is Coiled-coil domain-containing protein 137 (CCDC137), found in Homo sapiens (Human).